A 160-amino-acid chain; its full sequence is Cyclic pyranopterin monophosphate synthase (160 aa).

Substrate is bound by residues 73–75 (LCH) and 110–111 (ME). The active site involves D125.

The protein belongs to the MoaC family. As to quaternary structure, homohexamer; trimer of dimers.

The catalysed reaction is (8S)-3',8-cyclo-7,8-dihydroguanosine 5'-triphosphate = cyclic pyranopterin phosphate + diphosphate. Its pathway is cofactor biosynthesis; molybdopterin biosynthesis. Catalyzes the conversion of (8S)-3',8-cyclo-7,8-dihydroguanosine 5'-triphosphate to cyclic pyranopterin monophosphate (cPMP). The chain is Cyclic pyranopterin monophosphate synthase from Pseudomonas aeruginosa (strain LESB58).